A 174-amino-acid chain; its full sequence is Interleukin-1 receptor antagonist protein (174 aa).

The first 23 residues, 1 to 23 (MDIYIHGYLICLLLFLFRSETAC), serve as a signal peptide directing secretion. A disulfide bridge connects residues Cys-89 and Cys-139. N-linked (GlcNAc...) asparagine glycosylation occurs at Asn-107.

This sequence belongs to the IL-1 family.

Its subcellular location is the secreted. Its function is as follows. Anti-inflammatory antagonist of interleukin-1 family of proinflammatory cytokines such as interleukin-1beta/IL1B and interleukin-1alpha/IL1A. Protects from immune dysregulation and uncontrolled systemic inflammation triggered by IL1 for a range of innate stimulatory agents such as pathogens. In Bos taurus (Bovine), this protein is Interleukin-1 receptor antagonist protein (IL1RN).